We begin with the raw amino-acid sequence, 1183 residues long: Peroxisomal ATPase PEX6 (1183 aa).

The tract at residues 161 to 205 (ESRGKKTGEPEDGPLANGIDLNGVDDSDSDEDVLSQGDDDDENNV) is disordered. A compositionally biased stretch (acidic residues) spans 183–204 (GVDDSDSDEDVLSQGDDDDENN). Residues 576–785 (LPNNYISPVH…VERAMTACSE (210 aa)) are AAA-cassette D1. Positions 878–1070 (GILFYGPPGT…CSDAMLKAIT (193 aa)) are AAA-cassette D2. ATP is bound at residue 883-890 (GPPGTGKT). The disordered stretch occupies residues 1160–1183 (IMVDGPGTGGEGAFGDDGDEEGLY). The span at 1173 to 1183 (FGDDGDEEGLY) shows a compositional bias: acidic residues.

Belongs to the AAA ATPase family. Interacts with PEX1; forming the PEX1-PEX6 AAA ATPase complex, which is composed of a heterohexamer formed by a trimer of PEX1-PEX6 dimers.

Its subcellular location is the cytoplasm. It is found in the cytosol. The protein resides in the peroxisome membrane. It catalyses the reaction ATP + H2O = ADP + phosphate + H(+). Its function is as follows. Component of the PEX1-PEX6 AAA ATPase complex, a protein dislocase complex that mediates the ATP-dependent extraction of the PEX5 receptor from peroxisomal membranes, an essential step for PEX5 recycling. Specifically recognizes PEX5 monoubiquitinated at 'Cys-6', and pulls it out of the peroxisome lumen through the PEX2-PEX10-PEX12 retrotranslocation channel. Extraction by the PEX1-PEX6 AAA ATPase complex is accompanied by unfolding of the TPR repeats and release of bound cargo from PEX5. Regulates autophagy and biogenesis of peroxisomes and Woronin bodies. Plays important roles in mycelial growth and development and stress response. Is also essential for conidiation and fatty acid utilization. Required for nematode predation via trap formation. The sequence is that of Peroxisomal ATPase PEX6 from Arthrobotrys oligospora (strain ATCC 24927 / CBS 115.81 / DSM 1491) (Nematode-trapping fungus).